A 77-amino-acid polypeptide reads, in one-letter code: ATP synthase subunit c (77 aa).

The next 2 helical transmembrane spans lie at 7–27 (AFKY…AALG) and 57–77 (VGLI…ILFL).

Belongs to the ATPase C chain family. F-type ATPases have 2 components, F(1) - the catalytic core - and F(0) - the membrane proton channel. F(1) has five subunits: alpha(3), beta(3), gamma(1), delta(1), epsilon(1). F(0) has three main subunits: a(1), b(2) and c(10-14). The alpha and beta chains form an alternating ring which encloses part of the gamma chain. F(1) is attached to F(0) by a central stalk formed by the gamma and epsilon chains, while a peripheral stalk is formed by the delta and b chains.

It is found in the cell membrane. Its function is as follows. F(1)F(0) ATP synthase produces ATP from ADP in the presence of a proton or sodium gradient. F-type ATPases consist of two structural domains, F(1) containing the extramembraneous catalytic core and F(0) containing the membrane proton channel, linked together by a central stalk and a peripheral stalk. During catalysis, ATP synthesis in the catalytic domain of F(1) is coupled via a rotary mechanism of the central stalk subunits to proton translocation. Functionally, key component of the F(0) channel; it plays a direct role in translocation across the membrane. A homomeric c-ring of between 10-14 subunits forms the central stalk rotor element with the F(1) delta and epsilon subunits. This chain is ATP synthase subunit c, found in Lactobacillus helveticus (strain DPC 4571).